The primary structure comprises 946 residues: Bifunctional glutamine synthetase adenylyltransferase/adenylyl-removing enzyme (946 aa).

The interval 1–440 (MKPLSSPLQQ…VFNELIGDDE (440 aa)) is adenylyl removase. The tract at residues 449-946 (SEQWRELWQD…ASWQKWLVEE (498 aa)) is adenylyl transferase.

It belongs to the GlnE family. Mg(2+) serves as cofactor.

The catalysed reaction is [glutamine synthetase]-O(4)-(5'-adenylyl)-L-tyrosine + phosphate = [glutamine synthetase]-L-tyrosine + ADP. It catalyses the reaction [glutamine synthetase]-L-tyrosine + ATP = [glutamine synthetase]-O(4)-(5'-adenylyl)-L-tyrosine + diphosphate. Its function is as follows. Involved in the regulation of glutamine synthetase GlnA, a key enzyme in the process to assimilate ammonia. When cellular nitrogen levels are high, the C-terminal adenylyl transferase (AT) inactivates GlnA by covalent transfer of an adenylyl group from ATP to specific tyrosine residue of GlnA, thus reducing its activity. Conversely, when nitrogen levels are low, the N-terminal adenylyl removase (AR) activates GlnA by removing the adenylyl group by phosphorolysis, increasing its activity. The regulatory region of GlnE binds the signal transduction protein PII (GlnB) which indicates the nitrogen status of the cell. The protein is Bifunctional glutamine synthetase adenylyltransferase/adenylyl-removing enzyme of Shigella boydii serotype 18 (strain CDC 3083-94 / BS512).